Reading from the N-terminus, the 490-residue chain is Glutamyl-tRNA(Gln) amidotransferase subunit A (490 aa).

Active-site charge relay system residues include Lys78 and Ser158. Positions 131-159 (SNETSRFGPPINPWRRKGDNAGLTPGGSS) are disordered. The active-site Acyl-ester intermediate is the Ser182.

It belongs to the amidase family. GatA subfamily. As to quaternary structure, heterotrimer of A, B and C subunits.

The catalysed reaction is L-glutamyl-tRNA(Gln) + L-glutamine + ATP + H2O = L-glutaminyl-tRNA(Gln) + L-glutamate + ADP + phosphate + H(+). In terms of biological role, allows the formation of correctly charged Gln-tRNA(Gln) through the transamidation of misacylated Glu-tRNA(Gln) in organisms which lack glutaminyl-tRNA synthetase. The reaction takes place in the presence of glutamine and ATP through an activated gamma-phospho-Glu-tRNA(Gln). The protein is Glutamyl-tRNA(Gln) amidotransferase subunit A of Hyphomonas neptunium (strain ATCC 15444).